The sequence spans 318 residues: Fibronectin type III domain-containing protein 11 (318 aa).

One can recognise a Fibronectin type-III domain in the interval Val-210 to Glu-307.

The polypeptide is Fibronectin type III domain-containing protein 11 (FNDC11) (Homo sapiens (Human)).